Reading from the N-terminus, the 139-residue chain is ATP synthase epsilon chain (139 aa).

The protein belongs to the ATPase epsilon chain family. F-type ATPases have 2 components, CF(1) - the catalytic core - and CF(0) - the membrane proton channel. CF(1) has five subunits: alpha(3), beta(3), gamma(1), delta(1), epsilon(1). CF(0) has three main subunits: a, b and c.

It localises to the cell inner membrane. Its function is as follows. Produces ATP from ADP in the presence of a proton gradient across the membrane. This is ATP synthase epsilon chain from Escherichia coli O139:H28 (strain E24377A / ETEC).